The chain runs to 312 residues: Methionyl-tRNA formyltransferase (312 aa).

Residue 109–112 (SLLP) coordinates (6S)-5,6,7,8-tetrahydrofolate.

Belongs to the Fmt family.

The enzyme catalyses L-methionyl-tRNA(fMet) + (6R)-10-formyltetrahydrofolate = N-formyl-L-methionyl-tRNA(fMet) + (6S)-5,6,7,8-tetrahydrofolate + H(+). Attaches a formyl group to the free amino group of methionyl-tRNA(fMet). The formyl group appears to play a dual role in the initiator identity of N-formylmethionyl-tRNA by promoting its recognition by IF2 and preventing the misappropriation of this tRNA by the elongation apparatus. In Geotalea daltonii (strain DSM 22248 / JCM 15807 / FRC-32) (Geobacter daltonii), this protein is Methionyl-tRNA formyltransferase.